We begin with the raw amino-acid sequence, 497 residues long: Low affinity K(+) transporter 1 (497 aa).

Over 1-29 the chain is Extracellular; that stretch reads MFNHDWKYSINSKTFADLNIELFRNHKFK. A helical membrane pass occupies residues 30-50; the sequence is TVLNYIIGVVGWNGLKLALFV. Residues 51-80 lie on the Cytoplasmic side of the membrane; that stretch reads SDIYTCIKLLAFNSWSNNIIKPYLPFKISK. The helical transmembrane segment at 81–101 threads the bilayer; that stretch reads WLFSGCILASIVLLIWEAIAG. Topologically, residues 102-216 are extracellular; sequence MRIYKTGNIS…TNHEEAVILS (115 aa). The helical transmembrane segment at 217-237 threads the bilayer; it reads LMLFSFIIWALFVFKFLLAVI. Residues 238 to 497 lie on the Cytoplasmic side of the membrane; sequence CSIFVYYKII…EDEDRTYNYT (260 aa). Phosphoserine is present on residues S291 and S319. Residues 420-469 are disordered; the sequence is EFHGPLDSMPNTTNNIRNFNSNSSRPRPPPLQTKSSINSKADSNDNGRIY. Residues 429-444 show a composition bias toward low complexity; that stretch reads PNTTNNIRNFNSNSSR. Over residues 451 to 465 the composition is skewed to polar residues; sequence QTKSSINSKADSNDN.

Belongs to the KCH1 low affinity K(+) transporter family.

It localises to the vacuole membrane. It is found in the cell membrane. The enzyme catalyses K(+)(in) = K(+)(out). Low affinity potassium transporter that, with PRM6/KCH2, participates in high-affinity Ca(2+) influx system (HACS) activation during the response to mating pheromone. Directly promotes K(+) influx and HACS may electrochemically respond to this K(+) influx. KCH1 and KCH2 act at the apex of the calcium signaling pathway that is used for survival during prolonged exposures to mating pheromones. The chain is Low affinity K(+) transporter 1 from Saccharomyces cerevisiae (strain ATCC 204508 / S288c) (Baker's yeast).